Reading from the N-terminus, the 901-residue chain is Core protein VP3 (901 aa).

It belongs to the orbivirus VP3 family.

The protein localises to the virion. In terms of biological role, the VP3 protein is one of the five proteins (with VP1, VP4, VP6 and VP7) which form the inner capsid of the virus. The sequence is that of Core protein VP3 (Segment-3) from Bluetongue virus 10 (isolate USA) (BTV 10).